Reading from the N-terminus, the 806-residue chain is Sperm head and tail associated protein (806 aa).

Disordered regions lie at residues 1 to 36 (MNSS…PSSC), 257 to 329 (TPAS…MSGS), 428 to 496 (LNNQ…CPQP), and 707 to 806 (SQIN…SKKK). Polar residues predominate over residues 13–27 (APSTSPQADCPNNYS). Residues 277–290 (PPLSSASSPPSGNP) are compositionally biased toward low complexity. Over residues 320-329 (LSSQAGMSGS) the composition is skewed to polar residues. The interval 521–806 (KEPPPETAVL…QIKSPHSKKK (286 aa)) is interaction with CRISP2. Composition is skewed to low complexity over residues 710–723 (NHQN…KNSS) and 733–754 (RRGA…SSTQ). The segment covering 773-788 (QSQSPADGKIESQSKS) has biased composition (polar residues).

In terms of assembly, interacts with CRISP2. As to expression, isoforms 3 and 4 are expressed in testis (at protein level).

It localises to the cytoplasm. Its function is as follows. Plays a role during spermatogenesis. In Mus musculus (Mouse), this protein is Sperm head and tail associated protein (Nsun4).